The sequence spans 346 residues: tRNA N6-adenosine threonylcarbamoyltransferase (346 aa).

Fe cation-binding residues include histidine 111 and histidine 115. Residues 134–138, aspartate 167, glycine 180, and asparagine 279 each bind substrate; that span reads LVSGG. Aspartate 307 contributes to the Fe cation binding site.

This sequence belongs to the KAE1 / TsaD family. Fe(2+) is required as a cofactor.

The protein resides in the cytoplasm. It catalyses the reaction L-threonylcarbamoyladenylate + adenosine(37) in tRNA = N(6)-L-threonylcarbamoyladenosine(37) in tRNA + AMP + H(+). Functionally, required for the formation of a threonylcarbamoyl group on adenosine at position 37 (t(6)A37) in tRNAs that read codons beginning with adenine. Is involved in the transfer of the threonylcarbamoyl moiety of threonylcarbamoyl-AMP (TC-AMP) to the N6 group of A37, together with TsaE and TsaB. TsaD likely plays a direct catalytic role in this reaction. The chain is tRNA N6-adenosine threonylcarbamoyltransferase from Burkholderia multivorans (strain ATCC 17616 / 249).